The primary structure comprises 600 residues: UvrABC system protein C (600 aa).

Positions 15–100 (NSAGVYQYFN…IKQLHPKYNI (86 aa)) constitute a GIY-YIG domain. In terms of domain architecture, UVR spans 203–238 (SILIKNLEKQMLVLAQNENYEEAAKVRDQIVTIKDL).

It belongs to the UvrC family. As to quaternary structure, interacts with UvrB in an incision complex.

The protein localises to the cytoplasm. In terms of biological role, the UvrABC repair system catalyzes the recognition and processing of DNA lesions. UvrC both incises the 5' and 3' sides of the lesion. The N-terminal half is responsible for the 3' incision and the C-terminal half is responsible for the 5' incision. This is UvrABC system protein C from Campylobacter jejuni subsp. jejuni serotype O:23/36 (strain 81-176).